A 368-amino-acid chain; its full sequence is MLGIESSCDETGVGIVRGTTLLTNTVSSSMDEHVRFGGVIPEIASRAHLDAFVPTLQESLQEAGVTLEDIDAIAVTSGPGLAGALMVGVCAAKALAVATGKPLYAINHLVAHVGVGLLDGNRVSEGKHDAVAAAGLGAGKLPENLGALLVSGGHTEILRIRSITDDVELLGSTIDDAAGEAYDKVARILGLGYPGGPAIDKLAHQGNPKSIRFPRGLTQPKYMGTAEEKGPHRYDWSFSGLKTAVARCVEQFEARGEEVPVADIAAAFQEAVVDVISSKAVLACKEHGITDVLLGGGVAANSRLRELTGQRCASAGITLHVPPLGLCTDNGAMVAALGAQLIMAGISPSGVSFAPDSSMPVTTVSVPA.

Fe cation is bound by residues His-108 and His-112. Residues 149 to 153 (LVSGG), Asp-183, Gly-196, Asp-200, and Asn-301 each bind substrate. Position 329 (Asp-329) interacts with Fe cation.

The protein belongs to the KAE1 / TsaD family. Fe(2+) serves as cofactor.

It is found in the cytoplasm. The catalysed reaction is L-threonylcarbamoyladenylate + adenosine(37) in tRNA = N(6)-L-threonylcarbamoyladenosine(37) in tRNA + AMP + H(+). Functionally, required for the formation of a threonylcarbamoyl group on adenosine at position 37 (t(6)A37) in tRNAs that read codons beginning with adenine. Is involved in the transfer of the threonylcarbamoyl moiety of threonylcarbamoyl-AMP (TC-AMP) to the N6 group of A37, together with TsaE and TsaB. TsaD likely plays a direct catalytic role in this reaction. In Paenarthrobacter aurescens (strain TC1), this protein is tRNA N6-adenosine threonylcarbamoyltransferase.